The sequence spans 450 residues: Beta-glucosidase (450 aa).

The active-site Proton donor is the Glu166. The active-site Nucleophile is the Glu355.

The protein belongs to the glycosyl hydrolase 1 family.

The enzyme catalyses Hydrolysis of terminal, non-reducing beta-D-glucosyl residues with release of beta-D-glucose.. This chain is Beta-glucosidase (bglA), found in Niallia circulans (Bacillus circulans).